The chain runs to 383 residues: Heme A synthase (383 aa).

The next 8 membrane-spanning stretches (helical) occupy residues 38-58 (VRVW…VGGL), 127-147 (VIGL…KIPP), 153-173 (LFLL…MVAS), 187-207 (LATH…YIMV), 230-250 (ANWL…VAGI), 287-307 (LVQF…LYVW), 321-341 (AFDW…VTVL), and 344-364 (APWT…CLIL). Heme is bound at residue histidine 292. Histidine 352 is a heme binding site.

Belongs to the COX15/CtaA family. Type 2 subfamily. In terms of assembly, interacts with CtaB. Heme b serves as cofactor.

The protein localises to the cell membrane. The enzyme catalyses Fe(II)-heme o + 2 A + H2O = Fe(II)-heme a + 2 AH2. The protein operates within porphyrin-containing compound metabolism; heme A biosynthesis; heme A from heme O: step 1/1. Its function is as follows. Catalyzes the conversion of heme O to heme A by two successive hydroxylations of the methyl group at C8. The first hydroxylation forms heme I, the second hydroxylation results in an unstable dihydroxymethyl group, which spontaneously dehydrates, resulting in the formyl group of heme A. This is Heme A synthase from Dinoroseobacter shibae (strain DSM 16493 / NCIMB 14021 / DFL 12).